A 382-amino-acid polypeptide reads, in one-letter code: V-type proton ATPase subunit C 1 (382 aa).

An N-acetylthreonine modification is found at Thr-2.

Belongs to the V-ATPase C subunit family. As to quaternary structure, V-ATPase is a heteromultimeric enzyme made up of two complexes: the ATP-hydrolytic V1 complex and the proton translocation V0 complex. The V1 complex consists of three catalytic AB heterodimers that form a heterohexamer, three peripheral stalks each consisting of EG heterodimers, one central rotor including subunits D and F, and the regulatory subunits C and H. The proton translocation complex V0 consists of the proton transport subunit a, a ring of proteolipid subunits c9c'', rotary subunit d, subunits e and f, and the accessory subunits ATP6AP1/Ac45 and ATP6AP2/PRR.

The protein localises to the cytoplasmic vesicle. The protein resides in the secretory vesicle. Its subcellular location is the synaptic vesicle membrane. It localises to the clathrin-coated vesicle membrane. In terms of biological role, subunit of the V1 complex of vacuolar(H+)-ATPase (V-ATPase), a multisubunit enzyme composed of a peripheral complex (V1) that hydrolyzes ATP and a membrane integral complex (V0) that translocates protons. V-ATPase is responsible for acidifying and maintaining the pH of intracellular compartments and in some cell types, is targeted to the plasma membrane, where it is responsible for acidifying the extracellular environment. Subunit C is necessary for the assembly of the catalytic sector of the enzyme and is likely to have a specific function in its catalytic activity. The polypeptide is V-type proton ATPase subunit C 1 (ATP6V1C1) (Macaca fascicularis (Crab-eating macaque)).